We begin with the raw amino-acid sequence, 369 residues long: uncharacterized protein (369 aa).

Belongs to the Gfo/Idh/MocA family.

This is an uncharacterized protein from Schizosaccharomyces pombe (strain 972 / ATCC 24843) (Fission yeast).